Reading from the N-terminus, the 770-residue chain is POU domain, class 2, transcription factor 1 (770 aa).

Polar residues predominate over residues 1-26 (MNNPSETNKSSMESEDASTGTQTNGL). Disordered regions lie at residues 1–33 (MNNP…KQPV), 68–97 (LNVQ…VQSA), 262–285 (VQTL…EPSD), and 357–385 (LSSD…RRKK). Residues 80–97 (DSQQSSQPSSQPPSVQSA) are compositionally biased toward low complexity. Residues 262–272 (VQTLPQSQSTP) show a composition bias toward polar residues. Phosphothreonine is present on residues Thr271 and Thr277. Residues 281-355 (EEPSDLEELE…LLEKWLNDAE (75 aa)) form the POU-specific domain. Ser284 carries the post-translational modification Phosphoserine. The segment covering 357-372 (LSSDSTASSPSALNSP) has biased composition (low complexity). Positions 382 to 441 (RRKKRTSIETNIRVALEKSFMENQKPTSEDITLIAEQLNMEKEVIRVWFCNRRQKEKRIN) form a DNA-binding region, homeobox. A phosphoserine mark is found at Ser388 and Ser451. Residues 519-580 (TTTAGTTDST…TNTTQTTSTP (62 aa)) show a composition bias toward low complexity. The interval 519–589 (TTTAGTTDST…PLPSPLGASQ (71 aa)) is disordered.

This sequence belongs to the POU transcription factor family. Class-2 subfamily. In terms of assembly, interacts with POU2AF1; the interaction increases POU2F1 transactivation activity. Interacts with NR3C1, AR, PGR and HCFC1. Phosphorylated by PRKDC. Ubiquitously expressed. However, isoforms 4 and 5 are only expressed in lymphocytes.

The protein resides in the nucleus. Functionally, transcription factor that binds to the octamer motif (5'-ATTTGCAT-3') and activates the promoters of the genes for some small nuclear RNAs (snRNA) and of genes such as those for histone H2B and immunoglobulins. Modulates transcription transactivation by NR3C1, AR and PGR. In Mus musculus (Mouse), this protein is POU domain, class 2, transcription factor 1 (Pou2f1).